A 319-amino-acid polypeptide reads, in one-letter code: Phospho-N-acetylmuramoyl-pentapeptide-transferase (319 aa).

Helical transmembrane passes span 5–25 (LIPF…FIGF), 51–71 (TMGG…VLIW), 79–99 (AWIL…DDGI), 116–136 (LGQI…HFAF), 149–169 (SFLF…AVNL), 172–192 (GLDG…AWIA), 197–217 (NWVI…FFIF), 224–244 (IFMG…VSIF), 252–272 (LLIG…VISF), and 299–319 (VDIV…IIWG).

Belongs to the glycosyltransferase 4 family. MraY subfamily. Mg(2+) serves as cofactor.

Its subcellular location is the cell membrane. It catalyses the reaction UDP-N-acetyl-alpha-D-muramoyl-L-alanyl-gamma-D-glutamyl-L-lysyl-D-alanyl-D-alanine + di-trans,octa-cis-undecaprenyl phosphate = Mur2Ac(oyl-L-Ala-gamma-D-Glu-L-Lys-D-Ala-D-Ala)-di-trans,octa-cis-undecaprenyl diphosphate + UMP. It participates in cell wall biogenesis; peptidoglycan biosynthesis. Catalyzes the initial step of the lipid cycle reactions in the biosynthesis of the cell wall peptidoglycan: transfers peptidoglycan precursor phospho-MurNAc-pentapeptide from UDP-MurNAc-pentapeptide onto the lipid carrier undecaprenyl phosphate, yielding undecaprenyl-pyrophosphoryl-MurNAc-pentapeptide, known as lipid I. This is Phospho-N-acetylmuramoyl-pentapeptide-transferase from Lactobacillus johnsonii (strain CNCM I-12250 / La1 / NCC 533).